Reading from the N-terminus, the 1502-residue chain is Rho GTPase-activating protein 5 (1502 aa).

FF domains are found at residues 267–325, 366–420, 427–481, and 482–548; these read QLVV…HIEQ, KLME…HVQH, RVEM…HQRE, and IVEK…HIGF. Y550 carries the 3'-nitrotyrosine modification. S590 and S765 each carry phosphoserine. Positions 590-763 constitute a pG1 pseudoGTPase domain; the sequence is STNIDKVNLF…LESVKHNLDV (174 aa). The 166-residue stretch at 779–944 folds into the pG2 pseudoGTPase domain; sequence RIVMCAMCGD…FSDVLEKKNM (166 aa). A phosphoserine mark is found at S951 and S968. 3 disordered regions span residues 975–1004, 1022–1050, and 1069–1089; these read YNNY…LPTP, HSTP…PKTN, and NPRK…DPSD. Residues 1036–1045 are compositionally biased toward pro residues; the sequence is VPPPIKPKPV. Position 1115 is a phosphoserine (S1115). Disordered stretches follow at residues 1125-1156 and 1168-1254; these read FVNN…YKYK and YRRT…TRRN. Positions 1140 to 1150 are enriched in basic and acidic residues; sequence RTSKSHGERRP. 5 positions are modified to phosphoserine: S1173, S1176, S1195, S1202, and S1218. Residues 1262 to 1449 enclose the Rho-GAP domain; that stretch reads MPLQDLVTAE…TFIQQCQFFF (188 aa).

May interact with RASA1/p120GAP. As to expression, detected in skin fibroblasts (at protein level).

Its subcellular location is the cytoplasm. The protein localises to the cell membrane. GTPase-activating protein for Rho family members. The sequence is that of Rho GTPase-activating protein 5 (ARHGAP5) from Homo sapiens (Human).